Consider the following 132-residue polypeptide: Rubredoxin-1 (132 aa).

The Rubredoxin-like domain maps to M1–L53. The Fe cation site is built by C6, C9, C39, and C42. The disordered stretch occupies residues T108–K132. The span at Q113 to K122 shows a compositional bias: polar residues. Residues S123–K132 show a composition bias toward basic residues.

Belongs to the rubredoxin family. Fe(3+) is required as a cofactor.

Its subcellular location is the cytoplasm. The protein operates within hydrocarbon metabolism; alkane degradation. Functionally, not known. Probably involved in an electron transport pathway, but not required for the hydrocarbon hydroxylating system. Seems to be non-functional. This Ectopseudomonas oleovorans (Pseudomonas oleovorans) protein is Rubredoxin-1 (alkF).